The chain runs to 363 residues: tRNA dimethylallyltransferase (363 aa).

Residue 65 to 72 coordinates ATP; the sequence is GPTASGKS. Position 67–72 (67–72) interacts with substrate; it reads TASGKS. 2 interaction with substrate tRNA regions span residues 90-93 and 214-218; these read DSMQ and QRLIR.

Belongs to the IPP transferase family. Monomer. Requires Mg(2+) as cofactor.

It catalyses the reaction adenosine(37) in tRNA + dimethylallyl diphosphate = N(6)-dimethylallyladenosine(37) in tRNA + diphosphate. Its function is as follows. Catalyzes the transfer of a dimethylallyl group onto the adenine at position 37 in tRNAs that read codons beginning with uridine, leading to the formation of N6-(dimethylallyl)adenosine (i(6)A). This is tRNA dimethylallyltransferase from Rickettsia rickettsii (strain Sheila Smith).